The following is a 287-amino-acid chain: ATP synthase gamma chain (287 aa).

Belongs to the ATPase gamma chain family. In terms of assembly, F-type ATPases have 2 components, CF(1) - the catalytic core - and CF(0) - the membrane proton channel. CF(1) has five subunits: alpha(3), beta(3), gamma(1), delta(1), epsilon(1). CF(0) has three main subunits: a, b and c.

Its subcellular location is the cell inner membrane. Functionally, produces ATP from ADP in the presence of a proton gradient across the membrane. The gamma chain is believed to be important in regulating ATPase activity and the flow of protons through the CF(0) complex. This Klebsiella pneumoniae (strain 342) protein is ATP synthase gamma chain.